The following is a 75-amino-acid chain: DNA-directed RNA polymerase subunit omega (75 aa).

It belongs to the RNA polymerase subunit omega family. In cyanobacteria the RNAP catalytic core is composed of 2 alpha, 1 beta, 1 beta', 1 gamma and 1 omega subunit. When a sigma factor is associated with the core the holoenzyme is formed, which can initiate transcription.

The enzyme catalyses RNA(n) + a ribonucleoside 5'-triphosphate = RNA(n+1) + diphosphate. Its function is as follows. Promotes RNA polymerase assembly. Latches the N- and C-terminal regions of the beta' subunit thereby facilitating its interaction with the beta and alpha subunits. This is DNA-directed RNA polymerase subunit omega from Synechococcus sp. (strain WH7803).